The sequence spans 387 residues: V-set and immunoglobulin domain-containing protein 1 (387 aa).

The first 21 residues, 1–21 (MVFAFWKVFLILSCLAGQVSV), serve as a signal peptide directing secretion. In terms of domain architecture, Ig-like V-type spans 22–132 (VQVTIPDGFV…DFLGQNQGIL (111 aa)). Residues 22–232 (VQVTIPDGFV…EIDLTSSHPE (211 aa)) lie on the Extracellular side of the membrane. N-linked (GlcNAc...) asparagine glycans are attached at residues Asn32 and Asn38. Cys43 and Cys116 are oxidised to a cystine. N-linked (GlcNAc...) asparagine glycosylation is found at Asn133, Asn200, and Asn219. One can recognise an Ig-like C2-type domain in the interval 140-227 (PSKPLCSVQG…GNSSCEIDLT (88 aa)). Cysteines 161 and 211 form a disulfide. The helical transmembrane segment at 233 to 253 (VGIIVGALIGSLVGAAIIISV) threads the bilayer. The Cytoplasmic portion of the chain corresponds to 254 to 387 (VCFARNKAKA…SEDEKGVVKA (134 aa)). The disordered stretch occupies residues 266–387 (KERNSKTIAE…SEDEKGVVKA (122 aa)). The segment covering 284 to 296 (PRGESEAMPREDA) has biased composition (basic and acidic residues). A compositionally biased stretch (polar residues) spans 299-308 (LEVTLPSSIH). Pro residues predominate over residues 325–335 (TQEPAPEPAPG). Positions 344 to 368 (LDIELELEPETQSELEPEPEPEPES) are enriched in acidic residues.

Highly N-glycosylated. Appears not to contain significant amounts of O-linked carbohydrates or sialic acid in its sugar moieties. Detected only in stomach mucosa and testis, and to a much lesser level in pancreas (at protein level). Detected in gastric cancers (31%), esophageal carcinomas (50%) and ovarian cancers (23%).

The protein resides in the membrane. In Homo sapiens (Human), this protein is V-set and immunoglobulin domain-containing protein 1 (VSIG1).